The chain runs to 341 residues: MNENEYDNFDDLDDLLDEDPTKLDEQSPMMCKRRFCVHDSENKEKNAESKDSDGVQVANESEEDPELKEMMVDLQNEFANLMKNNGNENNVKTEDFNKLISALEEAAKVPRQQMEQGSSSLKSNSTDKGTLNGSNPGFKNIVSNTLDRLKENGNKVDTSLAEETKESQRSGQNNNIDDILSQLLDQMVASGGKESAENQFDLKDGEMDDAITKILDQMTSKEVLYEPMKEMRSEFGVWFQENGENEEHKEKIGTYKRQFNIVDEIVNIYELKDYDELKHKDRVTELLDELEQLGDSPIRSANSPLKHGNEEEELMKMLEIDGNDPNLGNLDKELTDGCKQQ.

Positions 1–18 are enriched in acidic residues; sequence MNENEYDNFDDLDDLLDE. Disordered stretches follow at residues 1–26, 39–66, 109–141, 293–312, and 318–341; these read MNEN…LDEQ, DSEN…EDPE, VPRQ…FKNI, LGDS…NEEE, and LEID…CKQQ. The span at 39–53 shows a compositional bias: basic and acidic residues; sequence DSENKEKNAESKDSD. A Phosphoserine modification is found at Ser61. The span at 113 to 141 shows a compositional bias: polar residues; the sequence is QMEQGSSSLKSNSTDKGTLNGSNPGFKNI. Ser303 carries the post-translational modification Phosphoserine. Residues 330 to 341 are compositionally biased toward basic and acidic residues; that stretch reads LDKELTDGCKQQ. Cys338 carries the post-translational modification Cysteine methyl ester. Cys338 is lipidated: S-farnesyl cysteine. The propeptide at 339 to 341 is removed in mature form; sequence KQQ.

The protein belongs to the peroxin-19 family. As to quaternary structure, interacts (farnesylated) with PEX3; farnesylation is required for this interaction. Interacts with PEX2, PEX5, PEX10, PEX11, PEX12, PEX13, PEX14, PEX17, PEX22, PEX25, PEX30 and PEX32; the interaction requires well-defined PEX19-binding sites within the peroxisomal membrane protein targeting signal (mPTS) of the PMPs and is independent on the presence of PEX3. Interacts with VPS1.

It is found in the cytoplasm. Its subcellular location is the peroxisome membrane. The protein resides in the endoplasmic reticulum membrane. Its function is as follows. Required for proper post-translational import and stabilization of peroxisomal membrane proteins (PMPs). Acts as a cytosolic import receptor for PMPs and delivers them to the docking factor PEX3 at the peroxisomal membrane for subsequent insertion into the membrane. Acts as a chaperone in stabilizing or maintaining PMPs in the lipid bilayer. Directs PEX17, a peripheral component of the peroxisomal matrix protein translocation machinery, to peroxisomes. Stabilizes VPS1, a protein required for peroxisomal fission, at the peroxisomal membrane. Also acts in conjunction with PEX3 in the formation of peroxisomes from preperoxisomal compartments at the endoplasmic reticulum during de novo peroxisome synthesis, probably via the import of additional PMPs. The polypeptide is Peroxisomal membrane protein import receptor PEX19 (PEX19) (Saccharomyces cerevisiae (strain YJM789) (Baker's yeast)).